The chain runs to 577 residues: Sensory neuron membrane protein 2 (577 aa).

Residues 1–6 (MVQCTL) lie on the Cytoplasmic side of the membrane. The helical transmembrane segment at 7-27 (IWAGIGAMMAVSGALLGWVVF) threads the bilayer. Topologically, residues 28 to 519 (PRAVHEKVIE…LMKVLSLLDV (492 aa)) are extracellular. Asn66, Asn161, Asn271, and Asn307 each carry an N-linked (GlcNAc...) asparagine glycan. Intrachain disulfides connect Cys316–Cys384, Cys345–Cys411, and Cys386–Cys400. The chain crosses the membrane as a helical span at residues 520-540 (VQWVLIGVGLLLAVLMPTVYF). The Cytoplasmic segment spans residues 541 to 577 (VKRCRGEGSRTVSPAVTATTSAASLSTVAGVTGDRSK).

This sequence belongs to the CD36 family.

The protein localises to the cell membrane. In terms of biological role, plays an olfactory role that is not restricted to pheromone sensitivity. The chain is Sensory neuron membrane protein 2 from Anopheles gambiae (African malaria mosquito).